A 535-amino-acid polypeptide reads, in one-letter code: MANLDLSKYGITGVTEILHNPSYDVLFAEETKPGLEGFEKGQVTELGAVNVMTGVYTGRSPKDKFFVKNEASENSVWWTSEEYKNDNKPCSEEAWADLKAKAVKELSNKRLFVVDTFCGANEGTRMKVRFIMEVAWQAHFVTNMFIRPTAEELANYGEPDFVCFNASKAKVDNYKELGLNSETATVFNLKTKEQVILNTWYGGEMKKGMFSIMNYMNPLRGIASMHCSANTDMEGTSSAIFFGLSGTGKTTLSTDPKRKLIGDDEHGWDNEGVFNYEGGCYAKVINLDKESEPDIFNAIKRDALLENVTVAADGKINFADKSVTENTRVSYPIYHIENIVKPVSKGPHAKQVIFLSADAFGVLPPVSILNPEQAQYYFLSGFTAKLAGTERGITEPTPTFSACFGAAFLSLHPTKYAEELVKKMEMTGAKAYLVNTGWNGSGKRISIKDTRGIIDAILDGSIDKAPTKVIPFFDFVVPTELPGVDPKILDPRDTYADPAQWNEKAKDLAGRFIKNFAKFTGNEAGKKLVAAGPKL.

Substrate-binding residues include R59, Y201, and K207. Residues K207, H226, and 243 to 251 each bind ATP; that span reads GLSGTGKTT. Mn(2+)-binding residues include K207 and H226. Residue D264 coordinates Mn(2+). ATP-binding positions include E292, R328, 444–445, and T450; that span reads RI. Residue R328 coordinates substrate.

This sequence belongs to the phosphoenolpyruvate carboxykinase (ATP) family. Requires Mn(2+) as cofactor.

The protein resides in the cytoplasm. The enzyme catalyses oxaloacetate + ATP = phosphoenolpyruvate + ADP + CO2. The protein operates within carbohydrate biosynthesis; gluconeogenesis. Involved in the gluconeogenesis. Catalyzes the conversion of oxaloacetate (OAA) to phosphoenolpyruvate (PEP) through direct phosphoryl transfer between the nucleoside triphosphate and OAA. The polypeptide is Phosphoenolpyruvate carboxykinase (ATP) (Bacteroides fragilis (strain ATCC 25285 / DSM 2151 / CCUG 4856 / JCM 11019 / LMG 10263 / NCTC 9343 / Onslow / VPI 2553 / EN-2)).